The chain runs to 260 residues: Lys-63-specific deubiquitinase BRCC36 (260 aa).

The MPN domain occupies 6-149 (VHLESDAFLV…YTCFQSVQAQ (144 aa)). Zn(2+)-binding residues include His-92, His-94, and Asp-105. The JAMM motif signature appears at 92 to 105 (HSHPHITVWPSHVD).

Belongs to the peptidase M67A family. BRCC36 subfamily. In terms of assembly, component of the BRCA1-A complex, at least composed of brca1, bard1, uimc1/rap80, abraxas1, brcc3/brcc36, babam2 and babam1/nba1. In the BRCA1-A complex, interacts directly with abraxas1 and babam2. Component of the BRISC complex, at least composed of abraxas2, brcc3/brcc36, babam2 and babam1/nba1. Within the complex, interacts directly with abraxas2. Both the BRCA1-A complex and the BRISC complex bind polyubiquitin. Zn(2+) serves as cofactor.

The protein resides in the nucleus. Its subcellular location is the cytoplasm. It localises to the cytoskeleton. The protein localises to the spindle pole. In terms of biological role, metalloprotease that specifically cleaves 'Lys-63'-linked polyubiquitin chains. Does not have activity toward 'Lys-48'-linked polyubiquitin chains. Component of the BRCA1-A complex, a complex that specifically recognizes 'Lys-63'-linked ubiquitinated histones H2A and H2AX at DNA lesions sites, leading to target the brca1-bard1 heterodimer to sites of DNA damage at double-strand breaks (DSBs). In the BRCA1-A complex, it specifically removes 'Lys-63'-linked ubiquitin on histones H2A and H2AX, antagonizing the rnf8-dependent ubiquitination at double-strand breaks (DSBs). Catalytic subunit of the BRISC complex, a multiprotein complex that specifically cleaves 'Lys-63'-linked ubiquitin in various substrates. Mediates the specific 'Lys-63'-specific deubiquitination associated with the COP9 signalosome complex (CSN), via the interaction of the BRISC complex with the CSN complex. The BRISC complex is required for normal mitotic spindle assembly and microtubule attachment to kinetochores via its role in deubiquitinating numa1. Plays a role in interferon signaling via its role in the deubiquitination of the interferon receptor ifnar1; deubiquitination increases ifnar1 activity by enhancing its stability and cell surface expression. Acts as a regulator of the NLRP3 inflammasome by mediating deubiquitination of nlrp3. Down-regulates the response to bacterial lipopolysaccharide (LPS) via its role in ifnar1 deubiquitination. This chain is Lys-63-specific deubiquitinase BRCC36 (brcc3), found in Salmo salar (Atlantic salmon).